Reading from the N-terminus, the 173-residue chain is Probable DNA-directed RNA polymerase subunit delta (173 aa).

The HTH HARE-type domain maps to 14–81 (NSFIDLAYMA…GEYMWGLRDW (68 aa)). The segment at 113 to 173 (LLGEDEVEDE…DEFDDEEEEE (61 aa)) is disordered. Residues 115–173 (GEDEVEDELDLLPSDGDEENVDTEDEEVEDELDEAGLVVEPDEEFEDEEDEFDDEEEEE) show a composition bias toward acidic residues.

This sequence belongs to the RpoE family. As to quaternary structure, RNAP is composed of a core of 2 alpha, a beta and a beta' subunits. The core is associated with a delta subunit and one of several sigma factors.

Functionally, participates in both the initiation and recycling phases of transcription. In the presence of the delta subunit, RNAP displays an increased specificity of transcription, a decreased affinity for nucleic acids, and an increased efficiency of RNA synthesis because of enhanced recycling. The sequence is that of Probable DNA-directed RNA polymerase subunit delta from Macrococcus caseolyticus (strain JCSC5402) (Macrococcoides caseolyticum).